The primary structure comprises 102 residues: MEQQQQQQQLRNLRDFLLVYNRMTELCFQRCVPSLHHRALDAEEEACLHSCAGKLIHSNHRLMAAYVQLMPALVQRRIADYEAASAVPGVAAEQPGVSPSGS.

Residues 27–51 carry the Twin CX3C motif motif; it reads CFQRCVPSLHHRALDAEEEACLHSC. Disulfide bonds link Cys27–Cys51 and Cys31–Cys47.

In terms of assembly, component of the TIM22 complex, which core is composed of TIMM22, associated with TIMM10 (TIMM10A and/or TIMM10B), TIMM9, AGK and TIMM29.

Its subcellular location is the mitochondrion inner membrane. Its function is as follows. Component of the TIM22 complex, a complex that mediates the import and insertion of multi-pass transmembrane proteins into the mitochondrial inner membrane. The TIM22 complex forms a twin-pore translocase that uses the membrane potential as the external driving force. In the TIM22 complex, it may act as a docking point for the soluble 70 kDa complex that guides the target proteins in transit through the aqueous mitochondrial intermembrane space. This chain is Mitochondrial import inner membrane translocase subunit Tim10 B (TIMM10B), found in Pongo abelii (Sumatran orangutan).